Consider the following 111-residue polypeptide: Probable 4-amino-4-deoxy-L-arabinose-phosphoundecaprenol flippase subunit ArnE (111 aa).

Topologically, residues 1–35 (MIWLTLVFASLLSVAGQLCQKQATCFVAISKRRKH) are cytoplasmic. Residues 36 to 56 (IVLWLGLALACLGLAMVLWLL) form a helical membrane-spanning segment. Positions 40-109 (LGLALACLGL…IIGGIVILGS (70 aa)) constitute an EamA domain. At 57–60 (VLQN) the chain is on the periplasmic side. A helical membrane pass occupies residues 61 to 81 (VPVGIAYPMLSLNFVWVTLAA). The Cytoplasmic portion of the chain corresponds to 82–87 (VKLWHE). Residues 88–108 (PVSPRHWCGVAFIIGGIVILG) traverse the membrane as a helical segment. Residues 109–111 (STV) are Periplasmic-facing.

The protein belongs to the ArnE family. As to quaternary structure, heterodimer of ArnE and ArnF.

It localises to the cell inner membrane. Its pathway is bacterial outer membrane biogenesis; lipopolysaccharide biosynthesis. Functionally, translocates 4-amino-4-deoxy-L-arabinose-phosphoundecaprenol (alpha-L-Ara4N-phosphoundecaprenol) from the cytoplasmic to the periplasmic side of the inner membrane. The polypeptide is Probable 4-amino-4-deoxy-L-arabinose-phosphoundecaprenol flippase subunit ArnE (Escherichia coli O157:H7).